Reading from the N-terminus, the 216-residue chain is Kynurenine formamidase (216 aa).

Trp24 is a binding site for substrate. Residues His54, His58, and Asp60 each contribute to the Zn(2+) site. His64 acts as the Proton donor/acceptor in catalysis. Residues His164 and Glu176 each contribute to the Zn(2+) site.

The protein belongs to the Cyclase 1 superfamily. KynB family. In terms of assembly, homodimer. Requires Zn(2+) as cofactor.

It carries out the reaction N-formyl-L-kynurenine + H2O = L-kynurenine + formate + H(+). It participates in amino-acid degradation; L-tryptophan degradation via kynurenine pathway; L-kynurenine from L-tryptophan: step 2/2. Functionally, catalyzes the hydrolysis of N-formyl-L-kynurenine to L-kynurenine, the second step in the kynurenine pathway of tryptophan degradation. The protein is Kynurenine formamidase of Erythrobacter litoralis (strain HTCC2594).